The primary structure comprises 235 residues: Cytidylate kinase (235 aa).

16-24 (GPAASGKST) contributes to the ATP binding site.

Belongs to the cytidylate kinase family. Type 1 subfamily.

It localises to the cytoplasm. The catalysed reaction is CMP + ATP = CDP + ADP. It carries out the reaction dCMP + ATP = dCDP + ADP. This is Cytidylate kinase from Chlorobaculum tepidum (strain ATCC 49652 / DSM 12025 / NBRC 103806 / TLS) (Chlorobium tepidum).